A 469-amino-acid polypeptide reads, in one-letter code: Sulfate adenylyltransferase subunit 1 (469 aa).

The tr-type G domain occupies 22-236; that stretch reads KDMLRVLTCG…LLNTVSVEQD (215 aa). A G1 region spans residues 31–38; the sequence is GSVDDGKS. Residue 31-38 participates in GTP binding; sequence GSVDDGKS. The interval 89-93 is G2; the sequence is GITID. Residues 110–113 are G3; that stretch reads DTPG. GTP contacts are provided by residues 110 to 114 and 165 to 168; these read DTPGH and NKMD. The G4 stretch occupies residues 165 to 168; that stretch reads NKMD. A G5 region spans residues 202–204; that stretch reads SAL.

Belongs to the TRAFAC class translation factor GTPase superfamily. Classic translation factor GTPase family. CysN/NodQ subfamily. Heterodimer composed of CysD, the smaller subunit, and CysN.

It carries out the reaction sulfate + ATP + H(+) = adenosine 5'-phosphosulfate + diphosphate. Its pathway is sulfur metabolism; hydrogen sulfide biosynthesis; sulfite from sulfate: step 1/3. Its function is as follows. With CysD forms the ATP sulfurylase (ATPS) that catalyzes the adenylation of sulfate producing adenosine 5'-phosphosulfate (APS) and diphosphate, the first enzymatic step in sulfur assimilation pathway. APS synthesis involves the formation of a high-energy phosphoric-sulfuric acid anhydride bond driven by GTP hydrolysis by CysN coupled to ATP hydrolysis by CysD. In Shewanella woodyi (strain ATCC 51908 / MS32), this protein is Sulfate adenylyltransferase subunit 1.